We begin with the raw amino-acid sequence, 1271 residues long: Breakpoint cluster region protein (1271 aa).

Met1 is modified (N-acetylmethionine). Positions 1–426 (MVDPVGFAEA…DGEGAFHGDA (426 aa)) are kinase. The stretch at 28–55 (VGDIEQELERCKASIRRLEQEVNQERFR) forms a coiled coil. The interval 67-173 (KKSYDRQRWG…GHGQPGADAE (107 aa)) is disordered. The segment covering 87–105 (ASEPRASASRPQPAPADGA) has biased composition (low complexity). Position 122 is a phosphoserine (Ser122). The span at 123–138 (PGKARPGTARRPGAAA) shows a compositional bias: low complexity. Ser139 carries the phosphoserine modification. Tyr177 carries the post-translational modification Phosphotyrosine; by HCK. Over residues 185–198 (ERGLVKVNDKEVSD) the composition is skewed to basic and acidic residues. 3 disordered regions span residues 185-247 (ERGL…GDYE), 286-392 (GMME…HKRH), and 416-476 (NDGE…SRDA). Residues 197 to 385 (SDRISSLGSQ…QSFDSSSPPT (189 aa)) are binding to ABL SH2-domain. Residues 199–208 (RISSLGSQAM) are compositionally biased toward polar residues. Ser202, Ser215, Ser222, and Ser236 each carry phosphoserine. Phosphotyrosine; by FES is present on Tyr246. 2 stretches are compositionally biased toward low complexity: residues 346 to 356 (SSGQSSRVSPS) and 369 to 382 (SPSQ…DSSS). A phosphoserine mark is found at Ser356, Ser377, and Ser382. Thr385 carries the phosphothreonine modification. The span at 441-451 (DRAEEQRRHQD) shows a compositional bias: basic and acidic residues. A phosphoserine mark is found at Ser459 and Ser463. Residue Arg471 is modified to Omega-N-methylarginine. Residues Ser473 and Ser488 each carry the phosphoserine modification. Positions 498–691 (MRKWVLSGIL…QNFLSSINEE (194 aa)) constitute a DH domain. Residue Tyr554 is modified to Phosphotyrosine. Thr641 carries the post-translational modification Phosphothreonine. Tyr644 carries the post-translational modification Phosphotyrosine. Thr693 is modified (phosphothreonine). Residues 708 to 866 (QLLKDSFMVE…WRENIREQQK (159 aa)) enclose the PH domain. The 128-residue stretch at 893 to 1020 (HSIPLTINKE…QDRDWQRTVI (128 aa)) folds into the C2 domain. Ser894 bears the Phosphoserine mark. Positions 1054–1248 (VKIAVVTKRE…VMSQVQVLLY (195 aa)) constitute a Rho-GAP domain. Ser1264 is subject to Phosphoserine.

Homotetramer. Interacts with PDZK1. May interact with CCPG1. Interacts with FES/FPS, ABL1, PIK3R1 and GRB2. Interacts with HCK. Interacts with SH2D5. Interacts with DLG4. Autophosphorylated. Phosphorylated by FES/FPS on tyrosine residues, leading to down-regulation of the BCR kinase activity. Phosphorylation at Tyr-177 by HCK is important for interaction with GRB2.

It is found in the postsynaptic density. The protein localises to the cell projection. It localises to the dendritic spine. Its subcellular location is the axon. The protein resides in the synapse. It catalyses the reaction L-seryl-[protein] + ATP = O-phospho-L-seryl-[protein] + ADP + H(+). The enzyme catalyses L-threonyl-[protein] + ATP = O-phospho-L-threonyl-[protein] + ADP + H(+). Its function is as follows. Protein with a unique structure having two opposing regulatory activities toward small GTP-binding proteins. The C-terminus is a GTPase-activating protein (GAP) domain which stimulates GTP hydrolysis by RAC1, RAC2 and CDC42. Accelerates the intrinsic rate of GTP hydrolysis of RAC1 or CDC42, leading to down-regulation of the active GTP-bound form. The central Dbl homology (DH) domain functions as guanine nucleotide exchange factor (GEF) that modulates the GTPases CDC42, RHOA and RAC1. Promotes the conversion of CDC42, RHOA and RAC1 from the GDP-bound to the GTP-bound form. The amino terminus contains an intrinsic kinase activity. Functions as an important negative regulator of neuronal RAC1 activity. Regulates macrophage functions such as CSF1-directed motility and phagocytosis through the modulation of RAC1 activity. Plays a major role as a RHOA GEF in keratinocytes being involved in focal adhesion formation and keratinocyte differentiation. The protein is Breakpoint cluster region protein of Homo sapiens (Human).